The following is a 279-amino-acid chain: Stathmin domain-containing protein 1 (279 aa).

2 disordered regions span residues 1 to 110 (MGCG…ERPK) and 178 to 254 (AAEE…VAQM). Gly-2 is lipidated: N-myristoyl glycine. Positions 22-32 (KGWEEGSKADV) are enriched in basic and acidic residues. Polar residues predominate over residues 34 to 45 (VTSSKENCSPQT). Residues 121-248 (QGIIQSRSKV…GEPLKRKKSE (128 aa)) form the SLD domain. 2 stretches are compositionally biased toward basic and acidic residues: residues 178 to 191 (AAEE…EEIR) and 232 to 242 (EKSDVQEGEPL).

The chain is Stathmin domain-containing protein 1 (Stmnd1) from Mus musculus (Mouse).